We begin with the raw amino-acid sequence, 462 residues long: Microspherule protein 1 (462 aa).

Position 1 is an N-acetylmethionine (methionine 1). The disordered stretch occupies residues 1 to 130 (MDKDSQGLLD…KSKQPLQVTK (130 aa)). The residue at position 22 (serine 22) is a Phosphoserine. Residues 43 to 55 (PKRRSSSRFIKRK) are compositionally biased toward basic residues. Low complexity predominate over residues 81–90 (SGRCSGSEPS). Serine 102 is modified (phosphoserine). At threonine 103 the chain carries Phosphothreonine. Residues 103–112 (TPVPPSPAPT) are compositionally biased toward pro residues. The residue at position 108 (serine 108) is a Phosphoserine. The Nuclear localization signal signature appears at 113-123 (PGLTKRVKKSK). Residues lysine 123 and lysine 130 each carry the N6-acetyllysine modification. Serine 282 carries the phosphoserine modification. A coiled-coil region spans residues 301–335 (LEHELTVADRRQKREIRQLEQELHKWQVLVDSITG). The FHA domain occupies 363 to 419 (ITLGRATKDNQIDVDLSLEGPAWKISRKQGVIKLKNNGDFFIANEGRRPIYIDGRPV). The UBR5-degron motif lies at 389–396 (RKQGVIKL).

Component of the chromatin remodeling INO80 complex; specifically part of a complex module associated with the N-terminus of INO80. Component of some MLL1/MLL complex, at least composed of the core components KMT2A/MLL1, ASH2L, HCFC1, WDR5 and RBBP5, as well as the facultative components BACC1, CHD8, E2F6, HSP70, INO80C, KANSL1, LAS1L, MAX, MCRS1, MGA, KAT8/MOF, PELP1, PHF20, PRP31, RING2, RUVB1/TIP49A, RUVB2/TIP49B, SENP3, TAF1, TAF4, TAF6, TAF7, TAF9 and TEX10. Component of the NSL complex at least composed of MOF/KAT8, KANSL1, KANSL2, KANSL3, MCRS1, PHF20, OGT1/OGT, WDR5 and HCFC1. Interacts with NOP2. Interacts with PINX1. Interacts with TERT. Interacts with CCDC85B. Interacts with DAXX. Interacts (via N-terminus) with FMR1 (via phosphorylated form). Interacts with FXR1 and FXR2. Interacts (via C-terminus) with NDE1 (via C-terminus); phosphorylation of NDE1 inhibits the interaction. Interacts (via C-terminus) with ZNF375. Interacts (via C-terminus) with active GTP-bound RHEB (via N-terminus) under conditions of high amino acid concentration; the interaction promotes mTORC1 complex activation by RHEB. Interacts (via N-terminus) with the mTORC1 complex; the interaction ensures mTORC1 activation by RHEB. Interacts with DYNC1I1; the interaction is required for the proper distribution of centriolar satellites. Interacts with TTBK2; the interaction is required for recruitment of TTBK2 to the mother centriole. Interacts with KIF2A; the interaction occurs during mitosis and facilitates chromosome alignment. In terms of processing, ubiquitinated by UBR5 when not assembled in the INO80 complex, leading to its degradation: UBR5 recognizes and binds a degron that is not accessible when MCRS1 is part of the INO80 complex. Phosphorylated by AURKA on Ser-35 and/or Ser-36 during mitosis which is required for kinetochore fiber assembly and mitotic progression but not for spindle localization or for chromosome-induced microtuble aster formation. Also phosphorylated by AURKA on Ser-85 and/or Ser-87. Phosphorylated by TTK/MPS1 which enhances recruitment of KIF2A to the minus end of spindle microtubules and facilitates precise chromosome segregation.

Its subcellular location is the nucleus. It localises to the nucleolus. The protein resides in the cytoplasm. It is found in the cytoskeleton. The protein localises to the microtubule organizing center. Its subcellular location is the centrosome. It localises to the spindle pole. The protein resides in the chromosome. It is found in the centromere. The protein localises to the kinetochore. Its subcellular location is the lysosome. It localises to the centriolar satellite. In terms of biological role, modulates the transcription repressor activity of DAXX by recruiting it to the nucleolus. As part of the NSL complex it may be involved in acetylation of nucleosomal histone H4 on several lysine residues. Putative regulatory component of the chromatin remodeling INO80 complex which is involved in transcriptional regulation, DNA replication and probably DNA repair. May also be an inhibitor of TERT telomerase activity. Binds to G-quadruplex structures in mRNA. Binds to RNA homomer poly(G) and poly(U). Maintains RHEB at the lysosome in its active GTP-bound form and prevents its interaction with the mTORC1 complex inhibitor TSC2, ensuring activation of the mTORC1 complex by RHEB. Stabilizes the minus ends of kinetochore fibers by protecting them from depolymerization, ensuring functional spindle assembly during mitosis. Following phosphorylation by TTK/MPS1, enhances recruitment of KIF2A to the minus ends of mitotic spindle microtubules which promotes chromosome alignment. Regulates the morphology of microtubule minus ends in mitotic spindle by maintaining them in a closed conformation characterized by the presence of an electron-dense cap. Regulates G2/M transition and spindle assembly during oocyte meiosis. Mediates histone modifications and transcriptional regulation in germinal vesicle oocytes which are required for meiotic progression. Also regulates microtubule nucleation and spindle assembly by activating aurora kinases during oocyte meiosis. Contributes to the establishment of centriolar satellites and also plays a role in primary cilium formation by recruiting TTBK2 to the mother centriole which is necessary for removal of the CP110 cap from the mother centriole, an early step in ciliogenesis. Required for epiblast development during early embryogenesis. Essential for cell viability. The protein is Microspherule protein 1 (Mcrs1) of Mus musculus (Mouse).